The sequence spans 355 residues: METHIRYSRQDRTLILLDQRVLPTVEEDFYCNDVADTIYALQTMVVRGAPAIGVTAAYGCCLAAYEAGHPAPHAQWQKELDTLLEKLAQARPTAVNLRWAVERMRSVWKSMGDPDLNTLIARWLDEAEAIHEEDKSINRAIGRHGATLIQDNDCIMTHCNAGALATAGYGTALGVVRGAVDAGRTGITVIANETRPFLQGARLTAYELHKDGIPVTVACDNACGLLMQRGMVQKVVVGADRIAANGDAANKIGTYSVALLAREHGIPFYVAAPLSTIDRATPSGKQIPIEERPAEEVTHVGETRITPEGVPVYNYAFDVTPAHLIAGIVTEQGVLRPPYTASIARAFAAADKDRS.

Substrate-binding positions include 47–49 (RGA), Arg-91, and Gln-199. The active-site Proton donor is the Asp-240. Residue 250 to 251 (NK) participates in substrate binding.

It belongs to the eIF-2B alpha/beta/delta subunits family. MtnA subfamily.

The catalysed reaction is 5-(methylsulfanyl)-alpha-D-ribose 1-phosphate = 5-(methylsulfanyl)-D-ribulose 1-phosphate. Its pathway is amino-acid biosynthesis; L-methionine biosynthesis via salvage pathway; L-methionine from S-methyl-5-thio-alpha-D-ribose 1-phosphate: step 1/6. Functionally, catalyzes the interconversion of methylthioribose-1-phosphate (MTR-1-P) into methylthioribulose-1-phosphate (MTRu-1-P). The polypeptide is Methylthioribose-1-phosphate isomerase (Oleidesulfovibrio alaskensis (strain ATCC BAA-1058 / DSM 17464 / G20) (Desulfovibrio alaskensis)).